The chain runs to 196 residues: MADGQMPFSCHYPSRLRRDPFRDSPLSSRLLDDGFGMDPFPDDLTASWPDWALPRLSSAWPGTLRSGMVPRGPTATARFGVPAEGRTPPPFPGEPWKVCVNVHSFKPEELMVKTKDGYVEVSGKHEEKQQEGGIVSKNFTKKIQLPAEVDPVTVFASLSPEGLLIIEAPQVPPYSTFGESSFNNELPQDSQEVTCT.

Phosphoserine is present on residues S24 and S57. Phosphothreonine; by PKC; in vitro is present on T63. 2 positions are modified to asymmetric dimethylarginine: R71 and R78. The sHSP domain occupies 74 to 185 (TATARFGVPA…TFGESSFNNE (112 aa)). Positions 176–196 (TFGESSFNNELPQDSQEVTCT) are disordered. The span at 177 to 196 (FGESSFNNELPQDSQEVTCT) shows a compositional bias: polar residues.

It belongs to the small heat shock protein (HSP20) family. As to quaternary structure, monomer. Forms a ternary complex with BAG3 and HSPA1A. Component of the chaperone-assisted selective autophagy (CASA) complex consisting of BAG3, HSPA8/HSC70, HSPB8 and STUB1/CHIP. Interacts with HSPB1. Interacts with DNAJB6. Interacts with BAG3. Predominantly expressed in skeletal muscle and heart.

The protein resides in the cytoplasm. Its subcellular location is the nucleus. Its function is as follows. Involved in the chaperone-assisted selective autophagy (CASA), a crucial process for protein quality control, particularly in mechanical strained cells and tissues such as muscle. Displays temperature-dependent chaperone activity. The protein is Heat shock protein beta-8 (HSPB8) of Homo sapiens (Human).